A 112-amino-acid chain; its full sequence is Protein lin-52 homolog (112 aa).

It belongs to the lin-52 family. In terms of assembly, component of the DREAM complex.

This is Protein lin-52 homolog (LIN52) from Gallus gallus (Chicken).